The following is a 542-amino-acid chain: CTP synthase (542 aa).

Positions 1-265 (MARYIFITGG…DSEVLCAFGI (265 aa)) are amidoligase domain. Ser-13 contacts CTP. Ser-13 serves as a coordination point for UTP. Residue 14-19 (SLGKGI) participates in ATP binding. Tyr-54 contacts L-glutamine. Asp-71 provides a ligand contact to ATP. Mg(2+)-binding residues include Asp-71 and Glu-139. CTP contacts are provided by residues 146–148 (DIE), 186–191 (KTKPTQ), and Lys-222. Residues 186-191 (KTKPTQ) and Lys-222 contribute to the UTP site. In terms of domain architecture, Glutamine amidotransferase type-1 spans 291-541 (TIAVVGKYTG…IEATVEQSRL (251 aa)). Ala-353 provides a ligand contact to L-glutamine. The active-site Nucleophile; for glutamine hydrolysis is the Cys-380. Residues 381–384 (FGMQ), Glu-404, and Arg-469 contribute to the L-glutamine site. Catalysis depends on residues His-514 and Glu-516.

The protein belongs to the CTP synthase family. In terms of assembly, homotetramer.

It catalyses the reaction UTP + L-glutamine + ATP + H2O = CTP + L-glutamate + ADP + phosphate + 2 H(+). It carries out the reaction L-glutamine + H2O = L-glutamate + NH4(+). The enzyme catalyses UTP + NH4(+) + ATP = CTP + ADP + phosphate + 2 H(+). It participates in pyrimidine metabolism; CTP biosynthesis via de novo pathway; CTP from UDP: step 2/2. With respect to regulation, allosterically activated by GTP, when glutamine is the substrate; GTP has no effect on the reaction when ammonia is the substrate. The allosteric effector GTP functions by stabilizing the protein conformation that binds the tetrahedral intermediate(s) formed during glutamine hydrolysis. Inhibited by the product CTP, via allosteric rather than competitive inhibition. Its function is as follows. Catalyzes the ATP-dependent amination of UTP to CTP with either L-glutamine or ammonia as the source of nitrogen. Regulates intracellular CTP levels through interactions with the four ribonucleotide triphosphates. The sequence is that of CTP synthase from Bartonella quintana (strain Toulouse) (Rochalimaea quintana).